The sequence spans 893 residues: DNA mismatch repair protein MutS (893 aa).

A compositionally biased stretch (low complexity) spans 1-17; the sequence is MESTMSSASTNASPPSA. The tract at residues 1–22 is disordered; the sequence is MESTMSSASTNASPPSASEKHT. 641 to 648 serves as a coordination point for ATP; sequence GPNMGGKS.

The protein belongs to the DNA mismatch repair MutS family.

Its function is as follows. This protein is involved in the repair of mismatches in DNA. It is possible that it carries out the mismatch recognition step. This protein has a weak ATPase activity. The sequence is that of DNA mismatch repair protein MutS from Herminiimonas arsenicoxydans.